A 202-amino-acid polypeptide reads, in one-letter code: Putative pre-16S rRNA nuclease (202 aa).

Disordered regions lie at residues 1-27 (MSGS…GVRI) and 170-202 (GCAA…SDER). Over residues 9-20 (GDSRPGDSRPGD) the composition is skewed to basic and acidic residues.

It belongs to the YqgF nuclease family.

It is found in the cytoplasm. Could be a nuclease involved in processing of the 5'-end of pre-16S rRNA. The polypeptide is Putative pre-16S rRNA nuclease (Frankia casuarinae (strain DSM 45818 / CECT 9043 / HFP020203 / CcI3)).